The following is a 40-amino-acid chain: MKLLSITFLFGLLALASANPLSPGNVIINGDCKVCNIRGD.

The signal sequence occupies residues 1–18 (MKLLSITFLFGLLALASA). The propeptide at 19–23 (NPLSP) is removed by a dipeptidylpeptidase. Cysteines 32 and 35 form a disulfide.

This sequence belongs to the bomanin family.

The protein resides in the secreted. Functionally, secreted immune-induced peptide induced by Toll signaling. Has a role in resistance to bacterial and fungal infections. The strength of antimicrobial activity appears to correlate with the overall level of expression. The polypeptide is Bomanin Short 6 (Drosophila melanogaster (Fruit fly)).